The following is a 325-amino-acid chain: Tetraacyldisaccharide 4'-kinase (325 aa).

Residue 54–61 (SVGGTGKT) participates in ATP binding.

The protein belongs to the LpxK family.

It carries out the reaction a lipid A disaccharide + ATP = a lipid IVA + ADP + H(+). Its pathway is glycolipid biosynthesis; lipid IV(A) biosynthesis; lipid IV(A) from (3R)-3-hydroxytetradecanoyl-[acyl-carrier-protein] and UDP-N-acetyl-alpha-D-glucosamine: step 6/6. Transfers the gamma-phosphate of ATP to the 4'-position of a tetraacyldisaccharide 1-phosphate intermediate (termed DS-1-P) to form tetraacyldisaccharide 1,4'-bis-phosphate (lipid IVA). The sequence is that of Tetraacyldisaccharide 4'-kinase from Rickettsia felis (strain ATCC VR-1525 / URRWXCal2) (Rickettsia azadi).